Reading from the N-terminus, the 299-residue chain is Probable phosphate butyryltransferase (299 aa).

This sequence belongs to the phosphate acetyltransferase and butyryltransferase family.

It catalyses the reaction butanoyl-CoA + phosphate = butanoyl phosphate + CoA. Catalyzes the conversion of butyryl-CoA through butyryl phosphate to butyrate. The chain is Probable phosphate butyryltransferase (yqiS) from Bacillus subtilis (strain 168).